Consider the following 247-residue polypeptide: Lipoprotein-releasing system ATP-binding protein LolD 2 (247 aa).

In terms of domain architecture, ABC transporter spans 19-247; the sequence is LEARKLVKSY…QDGRLQACGG (229 aa). ATP is bound at residue 56–63; that stretch reads GASGSGKT.

Belongs to the ABC transporter superfamily. Lipoprotein translocase (TC 3.A.1.125) family. In terms of assembly, the complex is composed of two ATP-binding proteins (LolD) and two transmembrane proteins (LolC and LolE).

Its subcellular location is the cell inner membrane. Its function is as follows. Part of the ABC transporter complex LolCDE involved in the translocation of mature outer membrane-directed lipoproteins, from the inner membrane to the periplasmic chaperone, LolA. Responsible for the formation of the LolA-lipoprotein complex in an ATP-dependent manner. This is Lipoprotein-releasing system ATP-binding protein LolD 2 from Chlorobaculum tepidum (strain ATCC 49652 / DSM 12025 / NBRC 103806 / TLS) (Chlorobium tepidum).